The primary structure comprises 255 residues: uncharacterized protein (255 aa).

It belongs to the methyltransferase superfamily.

This is an uncharacterized protein from Mycolicibacterium vanbaalenii (strain DSM 7251 / JCM 13017 / BCRC 16820 / KCTC 9966 / NRRL B-24157 / PYR-1) (Mycobacterium vanbaalenii).